The primary structure comprises 541 residues: Thioredoxin reductase (541 aa).

Residues 51 to 52, 71 to 74, 87 to 88, 92 to 96, Ala161, Asp357, and 364 to 366 each bind FAD; these read PG, DYVK, TC, GCVPK, and ELA. A disulfide bridge connects residues Cys88 and Cys93. Positions 438-452 are loop important for the interaction with TRX1; sequence HRQKHIRAQKDEYDL. His509 is an FAD binding site. Residue His509 is the Proton acceptor of the active site. An intrachain disulfide couples Cys535 to Cys540.

This sequence belongs to the class-I pyridine nucleotide-disulfide oxidoreductase family. As to quaternary structure, homodimer. The cofactor is FAD.

It localises to the cytoplasm. The enzyme catalyses [thioredoxin]-dithiol + NADP(+) = [thioredoxin]-disulfide + NADPH + H(+). Functionally, catalyzes the transfer of electrons from NADPH to thioredoxins TRX1, TRX2 and TRX3, which in turn act as reductants of disulfide containing proteins. Able to reduce nitroglutathione (GSNO), a compound involved in the transport of nitric oxide (NO); however, TRX1 is more efficient in reducing GSNO. Has no catalytic activity towards oxidized glutathione (GSSG). This chain is Thioredoxin reductase, found in Plasmodium falciparum (isolate FCH-5).